The primary structure comprises 388 residues: MNIHEYQGKEIFRSMGVAVPEGRVAFTAEEAVEKAKELNSDVYVVKAQIHAGGRGKAGGVKIAKSLSEVETYAKELLGKTLVTHQTGPEGKEIKRLYIEEGCAIQKEYYVGFVIDRATDQVTLMASEEGGTEIEEVAAKTPEKIFKETIDPVIGLSPFQARRIAFNINIPKESVNKAAKFLLALYNVFIEKDCSIVEINPLVTTADGDVLALDAKINFDDNALFRHKDVVELRDLEEEDPKEIEASKHDLSYIALDGDIGCMVNGAGLAMATMDTINHFGGNPANFLDAGGSATREKVTEAFKIILGDENVKGIFVNIFGGIMKCDVIAEGIVEAVKEVDLTLPLVVRLEGTNVELGKKILKDSGLAIEPAATMAEGAQKIVKLVKEA.

The ATP-grasp domain maps to 9 to 244 (KEIFRSMGVA…LEEEDPKEIE (236 aa)). ATP contacts are provided by residues lysine 46, 53 to 55 (GRG), glutamate 99, cysteine 102, and glutamate 107. Mg(2+) contacts are provided by asparagine 199 and aspartate 213. Residues asparagine 264 and 321 to 323 (GIM) contribute to the substrate site.

This sequence belongs to the succinate/malate CoA ligase beta subunit family. As to quaternary structure, heterotetramer of two alpha and two beta subunits. It depends on Mg(2+) as a cofactor.

It catalyses the reaction succinate + ATP + CoA = succinyl-CoA + ADP + phosphate. The catalysed reaction is GTP + succinate + CoA = succinyl-CoA + GDP + phosphate. Its pathway is carbohydrate metabolism; tricarboxylic acid cycle; succinate from succinyl-CoA (ligase route): step 1/1. In terms of biological role, succinyl-CoA synthetase functions in the citric acid cycle (TCA), coupling the hydrolysis of succinyl-CoA to the synthesis of either ATP or GTP and thus represents the only step of substrate-level phosphorylation in the TCA. The beta subunit provides nucleotide specificity of the enzyme and binds the substrate succinate, while the binding sites for coenzyme A and phosphate are found in the alpha subunit. The protein is Succinate--CoA ligase [ADP-forming] subunit beta of Staphylococcus aureus (strain Mu3 / ATCC 700698).